The chain runs to 142 residues: Large ribosomal subunit protein uL13 (142 aa).

It belongs to the universal ribosomal protein uL13 family. As to quaternary structure, part of the 50S ribosomal subunit.

Its function is as follows. This protein is one of the early assembly proteins of the 50S ribosomal subunit, although it is not seen to bind rRNA by itself. It is important during the early stages of 50S assembly. This is Large ribosomal subunit protein uL13 from Saccharophagus degradans (strain 2-40 / ATCC 43961 / DSM 17024).